The primary structure comprises 492 residues: Catalase (492 aa).

Residues His-65 and Asn-138 contribute to the active site. Tyr-348 contributes to the heme binding site.

It belongs to the catalase family. Homotetramer. Heme serves as cofactor.

The protein resides in the cytoplasm. The protein localises to the cytosol. It is found in the peroxisome matrix. It catalyses the reaction 2 H2O2 = O2 + 2 H2O. Its function is as follows. Catalyzes the degradation of hydrogen peroxide (H(2)O(2)) generated by peroxisomal oxidases to water and oxygen, thereby protecting cells from the toxic effects of hydrogen peroxide. The protein is Catalase of Vigna radiata var. radiata (Mung bean).